Reading from the N-terminus, the 73-residue chain is Translation initiation factor IF-1 (73 aa).

The S1-like domain maps to M1–K73.

This sequence belongs to the IF-1 family. Component of the 30S ribosomal translation pre-initiation complex which assembles on the 30S ribosome in the order IF-2 and IF-3, IF-1 and N-formylmethionyl-tRNA(fMet); mRNA recruitment can occur at any time during PIC assembly.

The protein localises to the cytoplasm. Functionally, one of the essential components for the initiation of protein synthesis. Stabilizes the binding of IF-2 and IF-3 on the 30S subunit to which N-formylmethionyl-tRNA(fMet) subsequently binds. Helps modulate mRNA selection, yielding the 30S pre-initiation complex (PIC). Upon addition of the 50S ribosomal subunit IF-1, IF-2 and IF-3 are released leaving the mature 70S translation initiation complex. The polypeptide is Translation initiation factor IF-1 (Cutibacterium acnes (strain DSM 16379 / KPA171202) (Propionibacterium acnes)).